Here is a 401-residue protein sequence, read N- to C-terminus: Adenylosuccinate synthetase (401 aa).

GTP-binding positions include 11 to 17 (GDEGKGK) and 39 to 41 (GHT). The Proton acceptor role is filled by D12. The Mg(2+) site is built by D12 and G39. Residues 12–15 (DEGK), 37–40 (NAGH), T127, R141, Q212, T227, and R290 contribute to the IMP site. The Proton donor role is filled by H40. 286–292 (ATTGRPR) contributes to the substrate binding site. Residues R292, 318-320 (KGD), and 390-392 (SVG) each bind GTP.

This sequence belongs to the adenylosuccinate synthetase family. As to quaternary structure, homodimer. Requires Mg(2+) as cofactor.

It is found in the cytoplasm. The enzyme catalyses IMP + L-aspartate + GTP = N(6)-(1,2-dicarboxyethyl)-AMP + GDP + phosphate + 2 H(+). It functions in the pathway purine metabolism; AMP biosynthesis via de novo pathway; AMP from IMP: step 1/2. Its function is as follows. Plays an important role in the de novo pathway of purine nucleotide biosynthesis. Catalyzes the first committed step in the biosynthesis of AMP from IMP. The chain is Adenylosuccinate synthetase from Thermosipho africanus (strain TCF52B).